Consider the following 230-residue polypeptide: Thymidylate synthase 1 (230 aa).

A dUMP-binding site is contributed by 92-93 (RR). Cys112 (nucleophile) is an active-site residue. Residues 132-135 (RSND), Asn143, and 173-175 (HVY) contribute to the dUMP site. (6R)-5,10-methylene-5,6,7,8-tetrahydrofolate is bound at residue Asp135.

The protein belongs to the thymidylate synthase family. Bacterial-type ThyA subfamily. In terms of assembly, homodimer.

The protein localises to the cytoplasm. It carries out the reaction dUMP + (6R)-5,10-methylene-5,6,7,8-tetrahydrofolate = 7,8-dihydrofolate + dTMP. Its pathway is pyrimidine metabolism; dTTP biosynthesis. In terms of biological role, catalyzes the reductive methylation of 2'-deoxyuridine-5'-monophosphate (dUMP) to 2'-deoxythymidine-5'-monophosphate (dTMP) while utilizing 5,10-methylenetetrahydrofolate (mTHF) as the methyl donor and reductant in the reaction, yielding dihydrofolate (DHF) as a by-product. This enzymatic reaction provides an intracellular de novo source of dTMP, an essential precursor for DNA biosynthesis. The polypeptide is Thymidylate synthase 1 (Bacillus amyloliquefaciens (Bacillus velezensis)).